The chain runs to 324 residues: Arginase (324 aa).

Positions 115, 143, 145, and 147 each coordinate Mn(2+). Residues 145-149 (HADIN), 156-158 (SGN), and D202 each bind substrate. 2 residues coordinate Mn(2+): D249 and D251. Substrate contacts are provided by T263 and E294.

It belongs to the arginase family. As to quaternary structure, homotrimer. Mn(2+) serves as cofactor.

The catalysed reaction is L-arginine + H2O = urea + L-ornithine. Its pathway is nitrogen metabolism; urea cycle; L-ornithine and urea from L-arginine: step 1/1. This is Arginase (agaA) from Emericella nidulans (strain FGSC A4 / ATCC 38163 / CBS 112.46 / NRRL 194 / M139) (Aspergillus nidulans).